A 184-amino-acid chain; its full sequence is ATP-dependent protease subunit HslV (184 aa).

Thr12 is a catalytic residue. Ala166, Cys169, and Thr172 together coordinate Na(+).

The protein belongs to the peptidase T1B family. HslV subfamily. As to quaternary structure, a double ring-shaped homohexamer of HslV is capped on each side by a ring-shaped HslU homohexamer. The assembly of the HslU/HslV complex is dependent on binding of ATP.

Its subcellular location is the cytoplasm. The catalysed reaction is ATP-dependent cleavage of peptide bonds with broad specificity.. With respect to regulation, allosterically activated by HslU binding. Protease subunit of a proteasome-like degradation complex believed to be a general protein degrading machinery. This chain is ATP-dependent protease subunit HslV, found in Nitrobacter winogradskyi (strain ATCC 25391 / DSM 10237 / CIP 104748 / NCIMB 11846 / Nb-255).